We begin with the raw amino-acid sequence, 450 residues long: Tubulin alpha-2 chain (450 aa).

Q11 lines the GTP pocket. N6-acetyllysine is present on K40. 6 residues coordinate GTP: E71, G144, T145, T179, N206, and N228. E71 serves as a coordination point for Mg(2+). E254 is an active-site residue.

The protein belongs to the tubulin family. In terms of assembly, dimer of alpha and beta chains. A typical microtubule is a hollow water-filled tube with an outer diameter of 25 nm and an inner diameter of 15 nM. Alpha-beta heterodimers associate head-to-tail to form protofilaments running lengthwise along the microtubule wall with the beta-tubulin subunit facing the microtubule plus end conferring a structural polarity. Microtubules usually have 13 protofilaments but different protofilament numbers can be found in some organisms and specialized cells. Requires Mg(2+) as cofactor. In terms of processing, undergoes a tyrosination/detyrosination cycle, the cyclic removal and re-addition of a C-terminal tyrosine residue by the enzymes tubulin tyrosine carboxypeptidase (TTCP) and tubulin tyrosine ligase (TTL), respectively. Post-translationally, acetylation of alpha chains at Lys-40 stabilizes microtubules and affects affinity and processivity of microtubule motors. This modification has a role in multiple cellular functions, ranging from cell motility, cell cycle progression or cell differentiation to intracellular trafficking and signaling.

The protein localises to the cytoplasm. It localises to the cytoskeleton. The catalysed reaction is GTP + H2O = GDP + phosphate + H(+). In terms of biological role, tubulin is the major constituent of microtubules, a cylinder consisting of laterally associated linear protofilaments composed of alpha- and beta-tubulin heterodimers. Microtubules grow by the addition of GTP-tubulin dimers to the microtubule end, where a stabilizing cap forms. Below the cap, tubulin dimers are in GDP-bound state, owing to GTPase activity of alpha-tubulin. This chain is Tubulin alpha-2 chain, found in Gossypium hirsutum (Upland cotton).